A 229-amino-acid chain; its full sequence is Large ribosomal subunit protein uL1 (229 aa).

The protein belongs to the universal ribosomal protein uL1 family. In terms of assembly, part of the 50S ribosomal subunit.

Its function is as follows. Binds directly to 23S rRNA. The L1 stalk is quite mobile in the ribosome, and is involved in E site tRNA release. In terms of biological role, protein L1 is also a translational repressor protein, it controls the translation of the L11 operon by binding to its mRNA. The sequence is that of Large ribosomal subunit protein uL1 from Pasteurella multocida (strain Pm70).